Here is a 498-residue protein sequence, read N- to C-terminus: UDP-N-acetylmuramate--L-alanine ligase (498 aa).

Position 122–128 (122–128) interacts with ATP; the sequence is GTHGKTS.

This sequence belongs to the MurCDEF family.

It is found in the cytoplasm. The enzyme catalyses UDP-N-acetyl-alpha-D-muramate + L-alanine + ATP = UDP-N-acetyl-alpha-D-muramoyl-L-alanine + ADP + phosphate + H(+). The protein operates within cell wall biogenesis; peptidoglycan biosynthesis. In terms of biological role, cell wall formation. This Corynebacterium jeikeium (strain K411) protein is UDP-N-acetylmuramate--L-alanine ligase.